Here is a 216-residue protein sequence, read N- to C-terminus: Probable transaldolase (216 aa).

Lys83 (schiff-base intermediate with substrate) is an active-site residue.

Belongs to the transaldolase family. Type 3B subfamily.

It is found in the cytoplasm. The catalysed reaction is D-sedoheptulose 7-phosphate + D-glyceraldehyde 3-phosphate = D-erythrose 4-phosphate + beta-D-fructose 6-phosphate. Its pathway is carbohydrate degradation; pentose phosphate pathway; D-glyceraldehyde 3-phosphate and beta-D-fructose 6-phosphate from D-ribose 5-phosphate and D-xylulose 5-phosphate (non-oxidative stage): step 2/3. Functionally, transaldolase is important for the balance of metabolites in the pentose-phosphate pathway. The polypeptide is Probable transaldolase (Thermoanaerobacter sp. (strain X514)).